The chain runs to 771 residues: Probable exo-1,4-beta-xylosidase bxlB (771 aa).

The signal sequence occupies residues 1-25 (MVGLTPQHYGNAIALMTYLASTALA). Asn-67 is a glycosylation site (N-linked (GlcNAc...) asparagine). The active site involves Asp-293. Residues Asn-305, Asn-345, Asn-423, Asn-462, and Asn-463 are each glycosylated (N-linked (GlcNAc...) asparagine).

The protein belongs to the glycosyl hydrolase 3 family.

It is found in the secreted. It carries out the reaction Hydrolysis of (1-&gt;4)-beta-D-xylans, to remove successive D-xylose residues from the non-reducing termini.. It participates in glycan degradation; xylan degradation. Functionally, xylan 1,4-beta-xylosidase involved in the hydrolysis of xylan, a major structural heterogeneous polysaccharide found in plant biomass representing the second most abundant polysaccharide in the biosphere, after cellulose. This chain is Probable exo-1,4-beta-xylosidase bxlB (bxlB), found in Aspergillus clavatus (strain ATCC 1007 / CBS 513.65 / DSM 816 / NCTC 3887 / NRRL 1 / QM 1276 / 107).